Consider the following 363-residue polypeptide: S-adenosylmethionine:tRNA ribosyltransferase-isomerase (363 aa).

It belongs to the QueA family. In terms of assembly, monomer.

It localises to the cytoplasm. The enzyme catalyses 7-aminomethyl-7-carbaguanosine(34) in tRNA + S-adenosyl-L-methionine = epoxyqueuosine(34) in tRNA + adenine + L-methionine + 2 H(+). It participates in tRNA modification; tRNA-queuosine biosynthesis. Its function is as follows. Transfers and isomerizes the ribose moiety from AdoMet to the 7-aminomethyl group of 7-deazaguanine (preQ1-tRNA) to give epoxyqueuosine (oQ-tRNA). This Haemophilus influenzae (strain 86-028NP) protein is S-adenosylmethionine:tRNA ribosyltransferase-isomerase.